A 36-amino-acid polypeptide reads, in one-letter code: GSGVSNGGTEMIQLSHIRERQRYWAQDNLRRRFLEK.

A Lysine amide modification is found at lysine 36.

In terms of tissue distribution, supra, subesophageal ganglia and segmental ganglia of the ventral nerve cord and brain.

In terms of biological role, may be involved in leech reproduction. The chain is Egg-laying-like hormone from Theromyzon tessulatum (Duck leech).